Reading from the N-terminus, the 441-residue chain is Carbohydrate sulfotransferase 3 (441 aa).

At 1-4 (MKMR) the chain is on the cytoplasmic side. Residues 5 to 21 (SKYAIILFFVVALVIIE) traverse the membrane as a helical; Signal-anchor for type II membrane protein segment. Residues 22–441 (KERNIISRVS…LLENRNFWIT (420 aa)) are Lumenal-facing. 2 N-linked (GlcNAc...) asparagine glycosylation sites follow: asparagine 47 and asparagine 58. Residue 106-112 (TRTGSSF) participates in 3'-phosphoadenylyl sulfate binding. Residue asparagine 221 is glycosylated (N-linked (GlcNAc...) asparagine). 266-274 (RDPRAVLAS) is a binding site for 3'-phosphoadenylyl sulfate. N-linked (GlcNAc...) asparagine glycosylation is present at asparagine 427.

The protein belongs to the sulfotransferase 1 family. Gal/GlcNAc/GalNAc subfamily. In terms of processing, N-glycosylated. In terms of tissue distribution, in electric organ, it is moderately expressed in spinal cord and electric lobe and undetectable in non-neural tissues. Expressed in a punctate distribution in the innervated portion of electrocytes. In the CNS, it is localized within the somas of motor neurons and neurons of the electromotor nucleus.

The protein localises to the golgi apparatus membrane. The catalysed reaction is chondroitin beta-D-glucuronate + n 3'-phosphoadenylyl sulfate = chondroitin 6'-sulfate + n adenosine 3',5'-bisphosphate + n H(+). It carries out the reaction 3'-phosphoadenylyl sulfate + keratan = adenosine 3',5'-bisphosphate + keratan 6'-sulfate.. In terms of biological role, sulfotransferase that utilizes 3'-phospho-5'-adenylyl sulfate (PAPS) as sulfonate donor to catalyze the transfer of sulfate to position 6 of the N-acetylgalactosamine (GalNAc) residue of chondroitin. Chondroitin sulfate constitutes the predominant proteoglycan present in cartilage and is distributed on the surfaces of many cells and extracellular matrices. Catalyzes with a lower efficiency the sulfation of Gal residues of keratan sulfate, another glycosaminoglycan. Can also catalyze the sulfation of the Gal residues in sialyl N-acetyllactosamine (sialyl LacNAc) oligosaccharides. The chain is Carbohydrate sulfotransferase 3 (CHST3) from Tetronarce californica (Pacific electric ray).